The primary structure comprises 216 residues: Ribosomal RNA large subunit methyltransferase E (216 aa).

S-adenosyl-L-methionine contacts are provided by glycine 67, tryptophan 69, aspartate 87, aspartate 103, and aspartate 128. Catalysis depends on lysine 168, which acts as the Proton acceptor.

The protein belongs to the class I-like SAM-binding methyltransferase superfamily. RNA methyltransferase RlmE family.

It is found in the cytoplasm. The enzyme catalyses uridine(2552) in 23S rRNA + S-adenosyl-L-methionine = 2'-O-methyluridine(2552) in 23S rRNA + S-adenosyl-L-homocysteine + H(+). Its function is as follows. Specifically methylates the uridine in position 2552 of 23S rRNA at the 2'-O position of the ribose in the fully assembled 50S ribosomal subunit. This is Ribosomal RNA large subunit methyltransferase E from Acinetobacter baylyi (strain ATCC 33305 / BD413 / ADP1).